We begin with the raw amino-acid sequence, 403 residues long: G2/mitotic-specific cyclin-B1 (403 aa).

Belongs to the cyclin family. Cyclin AB subfamily. In terms of assembly, interacts with the CDC2 protein kinase to form a serine/threonine kinase holoenzyme complex also known as maturation promoting factor (MPF). The cyclin subunit imparts substrate specificity to the complex.

Functionally, essential for the control of the cell cycle at the G2/M (mitosis) transition. The protein is G2/mitotic-specific cyclin-B1 (ccnb1) of Anguilla japonica (Japanese eel).